We begin with the raw amino-acid sequence, 134 residues long: Interleukin-5 (134 aa).

Residues 1-19 (MRMLLHLSLLALGASYMYA) form the signal peptide. The O-linked (GalNAc...) threonine glycan is linked to Thr22. 2 N-linked (GlcNAc...) asparagine glycosylation sites follow: Asn47 and Asn90.

Belongs to the IL-5 family. Homodimer; disulfide-linked. Interacts with IL5RA. Interacts with CSF2RB.

The protein localises to the secreted. Its function is as follows. Homodimeric cytokine expressed predominantly by T-lymphocytes and NK cells that plays an important role in the survival, differentiation, and chemotaxis of eosinophils. Also acts on activated and resting B-cells to induce immunoglobulin production, growth, and differentiation. Mechanistically, exerts its biological effects through a receptor composed of IL5RA subunit and the cytokine receptor common subunit beta/CSF2RB. Binding to the receptor leads to activation of various kinases including LYN, SYK and JAK2 and thereby propagates signals through the RAS-MAPK and JAK-STAT5 pathways respectively. In Cercocebus atys (Sooty mangabey), this protein is Interleukin-5 (IL5).